The chain runs to 197 residues: Nucleoid occlusion factor SlmA (197 aa).

Residues 7–67 form the HTH tetR-type domain; it reads INRREHILQC…GLIEFIEDAI (61 aa). The H-T-H motif DNA-binding region spans 30–49; it reads TTAKLAAEVGVSEAALYRHF. Positions 110 to 130 form a coiled coil; that stretch reads ALLGENERLRSRIDVLFAKIE.

The protein belongs to the nucleoid occlusion factor SlmA family. As to quaternary structure, homodimer. Interacts with FtsZ.

Its subcellular location is the cytoplasm. The protein localises to the nucleoid. In terms of biological role, required for nucleoid occlusion (NO) phenomenon, which prevents Z-ring formation and cell division over the nucleoid. Acts as a DNA-associated cell division inhibitor that binds simultaneously chromosomal DNA and FtsZ, and disrupts the assembly of FtsZ polymers. SlmA-DNA-binding sequences (SBS) are dispersed on non-Ter regions of the chromosome, preventing FtsZ polymerization at these regions. This Shewanella frigidimarina (strain NCIMB 400) protein is Nucleoid occlusion factor SlmA.